The chain runs to 317 residues: Large ribosomal subunit protein uL10 (317 aa).

A Phosphotyrosine modification is found at Tyr-24. Thr-59 bears the Phosphothreonine mark. Lys-264 is covalently cross-linked (Glycyl lysine isopeptide (Lys-Gly) (interchain with G-Cter in ubiquitin)). Residues Ala-294–Asp-317 form a disordered region. A Glycyl lysine isopeptide (Lys-Gly) (interchain with G-Cter in SUMO1); alternate cross-link involves residue Lys-297. Lys-297 is covalently cross-linked (Glycyl lysine isopeptide (Lys-Gly) (interchain with G-Cter in SUMO2); alternate). The span at Glu-302–Met-311 shows a compositional bias: acidic residues. 2 positions are modified to phosphoserine: Ser-304 and Ser-307.

Belongs to the universal ribosomal protein uL10 family. As to quaternary structure, P0 forms a pentameric complex by interaction with dimers of P1 and P2. Identified in a IGF2BP1-dependent mRNP granule complex containing untranslated mRNAs. Interacts with APEX1. Interacts with FMR1 isoform 6. Ubiquitinated at Lys-264 by RNF14 and RNF25 in response to ribosome collisions (ribosome stalling).

Its subcellular location is the nucleus. It is found in the cytoplasm. Ribosomal protein P0 is the functional equivalent of E.coli protein L10. The sequence is that of Large ribosomal subunit protein uL10 (RPLP0) from Homo sapiens (Human).